A 164-amino-acid polypeptide reads, in one-letter code: CDP-archaeol synthase (164 aa).

The next 4 helical transmembrane spans lie at 3-23 (LTVFFLLIWPPYVANGSAVFA), 55-75 (AIGIATGTVLGYFPNLVYHVI), 77-97 (VFDAFVLSASAVLGDLIGAFI), and 122-142 (FLVYSLFREIPVVYVLAAVVI).

The protein belongs to the CDP-archaeol synthase family. Mg(2+) is required as a cofactor.

Its subcellular location is the cell membrane. The enzyme catalyses 2,3-bis-O-(geranylgeranyl)-sn-glycerol 1-phosphate + CTP + H(+) = CDP-2,3-bis-O-(geranylgeranyl)-sn-glycerol + diphosphate. It participates in membrane lipid metabolism; glycerophospholipid metabolism. In terms of biological role, catalyzes the formation of CDP-2,3-bis-(O-geranylgeranyl)-sn-glycerol (CDP-archaeol) from 2,3-bis-(O-geranylgeranyl)-sn-glycerol 1-phosphate (DGGGP) and CTP. This reaction is the third ether-bond-formation step in the biosynthesis of archaeal membrane lipids. This Pyrobaculum aerophilum (strain ATCC 51768 / DSM 7523 / JCM 9630 / CIP 104966 / NBRC 100827 / IM2) protein is CDP-archaeol synthase.